A 282-amino-acid polypeptide reads, in one-letter code: Bifunctional protein FolD (282 aa).

Residues 164–166 and serine 189 each bind NADP(+); that span reads GRS.

Belongs to the tetrahydrofolate dehydrogenase/cyclohydrolase family. In terms of assembly, homodimer.

It catalyses the reaction (6R)-5,10-methylene-5,6,7,8-tetrahydrofolate + NADP(+) = (6R)-5,10-methenyltetrahydrofolate + NADPH. It carries out the reaction (6R)-5,10-methenyltetrahydrofolate + H2O = (6R)-10-formyltetrahydrofolate + H(+). It functions in the pathway one-carbon metabolism; tetrahydrofolate interconversion. Its function is as follows. Catalyzes the oxidation of 5,10-methylenetetrahydrofolate to 5,10-methenyltetrahydrofolate and then the hydrolysis of 5,10-methenyltetrahydrofolate to 10-formyltetrahydrofolate. The polypeptide is Bifunctional protein FolD (Lactobacillus gasseri (strain ATCC 33323 / DSM 20243 / BCRC 14619 / CIP 102991 / JCM 1131 / KCTC 3163 / NCIMB 11718 / NCTC 13722 / AM63)).